The following is a 498-amino-acid chain: Putative antiporter subunit mnhD2 (498 aa).

Transmembrane regions (helical) follow at residues 2–22 (LSNL…ILVF), 32–52 (YLYL…LIYV), 78–98 (LSLI…AYGF), 108–128 (YHLP…FLTS), 130–150 (LFNL…LITL), 161–181 (IIYV…IGLL), 209–229 (ISLI…FMWL), 240–260 (LAAL…IRFF), 271–291 (IHPL…IGVI), 308–328 (IGFI…GAIF), 330–350 (LVND…LVYI), 368–388 (FFGV…PFSG), 403–423 (GNYI…YSLF), and 450–470 (GILS…PVLL).

Belongs to the CPA3 antiporters (TC 2.A.63) subunit D family. In terms of assembly, may form a heterooligomeric complex that consists of seven subunits: mnhA2, mnhB2, mnhC2, mnhD2, mnhE2, mnhF2 and mnhG2.

It is found in the cell membrane. The polypeptide is Putative antiporter subunit mnhD2 (mnhD2) (Staphylococcus aureus (strain MRSA252)).